The chain runs to 352 residues: Gap junction alpha-4 protein (352 aa).

The Cytoplasmic portion of the chain corresponds to 2-23 (GDWEFLEKLLDQVQEHSTSIGK). A helical membrane pass occupies residues 24-46 (IWLMVLFIFRILILGLAGESVWG). Over 47–76 (DEQSDFTCNTEQPGCTNVCYDKAFPISHVR) the chain is Extracellular. A helical membrane pass occupies residues 77–99 (YWVLQFLFVSTPTLFYLGHVIYL). Residues 100–153 (SRKEEKLKQKESELRALDDKEQVEQAIAIIEKKKLKLYIQEDGTVKIKGALMYT) lie on the Cytoplasmic side of the membrane. Residues 154–176 (YLTSVIFKSIFEAGFLLGQWYLY) traverse the membrane as a helical segment. At 177 to 208 (GFVMTPIYVCERVPCPHKVDCFVSRPMEKTIF) the chain is on the extracellular side. The helical transmembrane segment at 209-231 (IIFMLVVSLISLFLNVLELIHLI) threads the bilayer. Topologically, residues 232–352 (CKSMIHALKK…SSSASKKQYV (121 aa)) are cytoplasmic. Positions 332–352 (HSTVEKASTRASSSASKKQYV) are disordered. Residues 340–352 (TRASSSASKKQYV) are compositionally biased toward low complexity.

Belongs to the connexin family. Alpha-type (group II) subfamily. In terms of assembly, a connexon is composed of a hexamer of connexins. Expressed in ovarian somatic cells, heart, leg muscle, liver and eye but not in brain.

It is found in the cell membrane. The protein localises to the cell junction. It localises to the gap junction. One gap junction consists of a cluster of closely packed pairs of transmembrane channels, the connexons, through which materials of low MW diffuse from one cell to a neighboring cell. The sequence is that of Gap junction alpha-4 protein (gja4) from Xenopus laevis (African clawed frog).